Here is a 168-residue protein sequence, read N- to C-terminus: Peptide deformylase 1 (168 aa).

Fe cation contacts are provided by Cys91 and His133. The active site involves Glu134. Fe cation is bound at residue His137.

Belongs to the polypeptide deformylase family. It depends on Fe(2+) as a cofactor.

It catalyses the reaction N-terminal N-formyl-L-methionyl-[peptide] + H2O = N-terminal L-methionyl-[peptide] + formate. Removes the formyl group from the N-terminal Met of newly synthesized proteins. Requires at least a dipeptide for an efficient rate of reaction. N-terminal L-methionine is a prerequisite for activity but the enzyme has broad specificity at other positions. The chain is Peptide deformylase 1 from Vibrio vulnificus (strain YJ016).